A 103-amino-acid polypeptide reads, in one-letter code: ASRSQAEDVRVEGAFPVTMLPGDGVGPELMAAVGVIECLKLGDGLFLQCCEEVAELYPKNIANPTATLLASCMMLDHLKTSDMGGYATCQDFTEAVIGALSHP.

The protein belongs to the isocitrate and isopropylmalate dehydrogenases family. Heterooligomer of subunits alpha (IDH3A), beta (IDH3B), and gamma (IDH3G) in the apparent ratio of 2:1:1. The heterodimer containing one IDH3A and one IDH3B subunit and the heterodimer containing one IDH3A and one IDH3G subunit assemble into a heterotetramer (which contains two subunits of IDH3A, one of IDH3B and one of IDH3G) and further into the heterooctamer.

The protein localises to the mitochondrion. The heterotetramer and the heterodimer composed of IDH3A and IDH3G subunits can be allosterically activated by citrate (CIT) or/and ADP, and the two activators can act independently or synergistically. The heterodimer composed of IDH3A and IDH3B subunits cannot be allosterically regulated and the allosteric regulation of the heterotetramer is through the IDH3G subunit and not the IDH3B subunit. The IDH3G subunit contains the allosteric site which consists of a CIT-binding site and an ADP-binding site, and the binding of CIT and ADP causes conformational changes at the allosteric site which are transmitted to the active site in the catalytic subunit (IDH3A) through a cascade of conformational changes at the heterodimer interface, leading to stabilization of the isocitrate-binding at the active site and thus activation of the enzyme. ATP can activate the heterotetramer and the heterodimer composed of IDH3A and IDH3G subunits at low concentrations but inhibits their activities at high concentrations, whereas ATP exhibits only inhibitory effect on the heterodimer composed of IDH3A and IDH3B subunits. Plays a structural role to facilitate the assembly and ensure the full activity of the enzyme catalyzing the decarboxylation of isocitrate (ICT) into alpha-ketoglutarate. The heterodimer composed of the alpha (IDH3A) and beta (IDH3B) subunits and the heterodimer composed of the alpha (IDH3A) and gamma (IDH3G) subunits, have considerable basal activity but the full activity of the heterotetramer (containing two subunits of IDH3A, one of IDH3B and one of IDH3G) requires the assembly and cooperative function of both heterodimers. This chain is Isocitrate dehydrogenase [NAD] subunit beta, mitochondrial (IDH3B), found in Sus scrofa (Pig).